We begin with the raw amino-acid sequence, 499 residues long: UPF0159 protein Ta1429 (499 aa).

ThyX domains lie at 1-246 (MIDR…ALSQ) and 271-476 (EKVR…IKFV).

Belongs to the UPF0159 family.

This Thermoplasma acidophilum (strain ATCC 25905 / DSM 1728 / JCM 9062 / NBRC 15155 / AMRC-C165) protein is UPF0159 protein Ta1429.